Consider the following 294-residue polypeptide: Ribosomal protein L11 methyltransferase (294 aa).

The S-adenosyl-L-methionine site is built by threonine 147, glycine 169, aspartate 191, and asparagine 231.

It belongs to the methyltransferase superfamily. PrmA family.

The protein localises to the cytoplasm. The catalysed reaction is L-lysyl-[protein] + 3 S-adenosyl-L-methionine = N(6),N(6),N(6)-trimethyl-L-lysyl-[protein] + 3 S-adenosyl-L-homocysteine + 3 H(+). Functionally, methylates ribosomal protein L11. This chain is Ribosomal protein L11 methyltransferase, found in Dichelobacter nodosus (strain VCS1703A).